A 325-amino-acid polypeptide reads, in one-letter code: tRNA(Ile)-lysidine synthase (325 aa).

Residue 34–39 (SGGADS) participates in ATP binding.

It belongs to the tRNA(Ile)-lysidine synthase family.

It localises to the cytoplasm. It carries out the reaction cytidine(34) in tRNA(Ile2) + L-lysine + ATP = lysidine(34) in tRNA(Ile2) + AMP + diphosphate + H(+). Functionally, ligates lysine onto the cytidine present at position 34 of the AUA codon-specific tRNA(Ile) that contains the anticodon CAU, in an ATP-dependent manner. Cytidine is converted to lysidine, thus changing the amino acid specificity of the tRNA from methionine to isoleucine. The protein is tRNA(Ile)-lysidine synthase of Rhodococcus erythropolis (strain PR4 / NBRC 100887).